Consider the following 533-residue polypeptide: GMP synthase [glutamine-hydrolyzing] (533 aa).

The Glutamine amidotransferase type-1 domain occupies 22-215 (RILILDFGSQ…THNVAGCSGT (194 aa)). Cys99 functions as the Nucleophile in the catalytic mechanism. Residues His189 and Glu191 contribute to the active site. The GMPS ATP-PPase domain occupies 216 to 408 (WTMAGFRELE…LGIPESIVGR (193 aa)). Residue 243–249 (SGGVDSS) participates in ATP binding.

In terms of assembly, homodimer.

The enzyme catalyses XMP + L-glutamine + ATP + H2O = GMP + L-glutamate + AMP + diphosphate + 2 H(+). The protein operates within purine metabolism; GMP biosynthesis; GMP from XMP (L-Gln route): step 1/1. Functionally, catalyzes the synthesis of GMP from XMP. In Gluconobacter oxydans (strain 621H) (Gluconobacter suboxydans), this protein is GMP synthase [glutamine-hydrolyzing].